The following is a 68-amino-acid chain: Protein transport protein Sec61 subunit gamma (68 aa).

The Cytoplasmic segment spans residues 1 to 32 (MDQFQALIEPARQFSKDSYRLVKRCTKPDRKE). The chain crosses the membrane as a helical span at residues 33 to 61 (YQKIAMATAIGFAIMGFIGFFVKLIHIPI). Topologically, residues 62-68 (NNIIVGA) are extracellular.

Belongs to the SecE/SEC61-gamma family. In terms of assembly, heterotrimeric complex composed of SEC61-alpha, SEC61-beta and SEC61-gamma. In terms of tissue distribution, expressed in the germline. Expression in the germline is regulated in a sex- and meiotic cycle stage-specific manner. Expressed in somatic tissues including the intestine and somatic gonad. Expressed in the intestine more highly in hermaprodites than in males. In hermaphrodites, weakly expressed in the spermatheca.

It localises to the endoplasmic reticulum membrane. In terms of biological role, required for oocyte development and ovulation. Required for the translocation of secretory and transmembrane proteins into the endoplasmic reticulum in vitro. The sequence is that of Protein transport protein Sec61 subunit gamma from Caenorhabditis elegans.